Consider the following 139-residue polypeptide: Natriuretic peptides A (139 aa).

The first 21 residues, 1-21 (MTALVLWGLLLLLGQHTQVNS), serve as a signal peptide directing secretion. Residues 22-114 (HVLGRPFSAS…QDLLMSLRKR (93 aa)) constitute a propeptide that is removed on maturation. A disulfide bridge connects residues C118 and C134.

The protein belongs to the natriuretic peptide family.

It is found in the secreted. In terms of biological role, hormone playing a key role in cardiovascular homeostasis through regulation of natriuresis, diuresis, and vasodilation. Has a cGMP-stimulating activity. This Takifugu rubripes (Japanese pufferfish) protein is Natriuretic peptides A (nppa).